The chain runs to 815 residues: Probable AMP deaminase (815 aa).

Residues 5 to 27 (YALHLAVATLLGASFAAASAYYM) form a helical membrane-spanning segment. 2 disordered regions span residues 53-116 (LLDA…PVPT) and 144-173 (LLTNGTIGSDPLPGKASQNGDTKPVPSTNM). Residues 105–116 (VRPTTPRSPVPT) are compositionally biased toward low complexity. Positions 159-173 (ASQNGDTKPVPSTNM) are enriched in polar residues. The Zn(2+) site is built by His367 and His369. Residues His369 and 438–443 (KFNLKY) contribute to the substrate site. His635 is a binding site for Zn(2+). Residue Glu638 participates in substrate binding. His657 acts as the Proton acceptor in catalysis. Asp712 lines the Zn(2+) pocket. 713–716 (DPLQ) serves as a coordination point for substrate.

The protein belongs to the metallo-dependent hydrolases superfamily. Adenosine and AMP deaminases family. Homodimer. Zn(2+) is required as a cofactor.

Its subcellular location is the membrane. It carries out the reaction AMP + H2O + H(+) = IMP + NH4(+). Its pathway is purine metabolism; IMP biosynthesis via salvage pathway; IMP from AMP: step 1/1. Functionally, AMP deaminase plays a critical role in energy metabolism. The protein is Probable AMP deaminase (AMPD) of Oryza sativa subsp. japonica (Rice).